Consider the following 361-residue polypeptide: MATLARLQARSSTVGNQYYFRNSVVDPFRKKENDAAVKIQSWFRGCQVRAYIRHLNRIVTIIQKWWRSFLGRKQYQLTVQVAYYTMMMNLYNAMAVRIQRRWRGYRVRKYLFNYYYLKEYLKVVSETNDAIRKALEEFAEMKEREEKKANLEREEKKRDYQARKMHYLLSTKQIPGIYNSPFRKEPDPWELQLQKAKPLTHRRPKVKQKDSTSLTDWLACTSARSFPRSEILPPINRKQCQGPFRDITEVLEQRYRPLEPTLRVAEPIDELKLAREELRREEWLQNVNDNMFLPFSSYHKNEKYIPSMHLSSKYGPISYKEQFRSENPKKWICDKDFQTVLPSFELFSKYGKLYSKAGQIV.

IQ domains follow at residues E32–I61, L55–Y84, and Y91–Y120.

It is found in the cytoplasm. The protein is Spermatogenesis-associated protein 17 (SPATA17) of Homo sapiens (Human).